Reading from the N-terminus, the 327-residue chain is Peroxidase N (327 aa).

The first 28 residues, 1 to 28, serve as a signal peptide directing secretion; that stretch reads MKTQTKVMGGHVLLTVFTLCMLCSAVRA. Gln29 is modified (pyrrolidone carboxylic acid). Cystine bridges form between Cys39–Cys116, Cys72–Cys77, Cys122–Cys323, and Cys200–Cys232. His70 acts as the Proton acceptor in catalysis. 5 residues coordinate Ca(2+): Asp71, Val74, Gly76, Asp78, and Ser80. A glycan (N-linked (GlcNAc...) asparagine) is linked at Asn155. Pro163 contacts substrate. N-linked (GlcNAc...) asparagine glycosylation occurs at Asn182. His193 is a binding site for heme b. A Ca(2+)-binding site is contributed by Thr194. N-linked (GlcNAc...) asparagine glycosylation is found at Asn209 and Asn239. Ca(2+) is bound at residue Asp245. Asn247 carries an N-linked (GlcNAc...) asparagine glycan. Ca(2+) contacts are provided by Ser248 and Asp253. Residue Asn281 is glycosylated (N-linked (GlcNAc...) asparagine).

The protein belongs to the peroxidase family. Classical plant (class III) peroxidase subfamily. It depends on Ca(2+) as a cofactor. Heme b is required as a cofactor.

It localises to the secreted. It carries out the reaction 2 a phenolic donor + H2O2 = 2 a phenolic radical donor + 2 H2O. Functionally, removal of H(2)O(2), oxidation of toxic reductants, biosynthesis and degradation of lignin, suberization, auxin catabolism, response to environmental stresses such as wounding, pathogen attack and oxidative stress. These functions might be dependent on each isozyme/isoform in each plant tissue. This is Peroxidase N (HRPN) from Armoracia rusticana (Horseradish).